The following is a 509-amino-acid chain: UDP-N-acetylmuramoyl-L-alanyl-D-glutamate--2,6-diaminopimelate ligase (509 aa).

Serine 32 serves as a coordination point for UDP-N-acetyl-alpha-D-muramoyl-L-alanyl-D-glutamate. 117-123 (GTNGKTT) contacts ATP. UDP-N-acetyl-alpha-D-muramoyl-L-alanyl-D-glutamate is bound by residues 159-160 (TT), serine 186, glutamine 192, and arginine 194. The residue at position 226 (lysine 226) is an N6-carboxylysine. Meso-2,6-diaminopimelate is bound by residues arginine 401, 425-428 (DNPR), glycine 476, and glutamate 480. Positions 425–428 (DNPR) match the Meso-diaminopimelate recognition motif motif.

It belongs to the MurCDEF family. MurE subfamily. The cofactor is Mg(2+). Post-translationally, carboxylation is probably crucial for Mg(2+) binding and, consequently, for the gamma-phosphate positioning of ATP.

It is found in the cytoplasm. The catalysed reaction is UDP-N-acetyl-alpha-D-muramoyl-L-alanyl-D-glutamate + meso-2,6-diaminopimelate + ATP = UDP-N-acetyl-alpha-D-muramoyl-L-alanyl-gamma-D-glutamyl-meso-2,6-diaminopimelate + ADP + phosphate + H(+). It participates in cell wall biogenesis; peptidoglycan biosynthesis. Catalyzes the addition of meso-diaminopimelic acid to the nucleotide precursor UDP-N-acetylmuramoyl-L-alanyl-D-glutamate (UMAG) in the biosynthesis of bacterial cell-wall peptidoglycan. In Prochlorococcus marinus (strain NATL2A), this protein is UDP-N-acetylmuramoyl-L-alanyl-D-glutamate--2,6-diaminopimelate ligase.